Reading from the N-terminus, the 424-residue chain is Acetyl-CoA acetyltransferase, mitochondrial (424 aa).

The N-terminal 30 residues, 1-30 (MAALAVLHGVVRRPLLRGLLQEVRCLGRSY), are a transit peptide targeting the mitochondrion. Residue Lys63 is modified to N6-acetyllysine; alternate. Lys63 is subject to N6-succinyllysine; alternate. Lys75 is modified (N6-succinyllysine). Residue Cys123 is the Acyl-thioester intermediate of the active site. An N6-acetyllysine; alternate mark is found at Lys171, Lys178, Lys187, and Lys199. Residues Lys171, Lys178, Lys187, and Lys199 each carry the N6-succinyllysine; alternate modification. Phosphoserine is present on Ser204. Residue Tyr216 coordinates CoA. Tyr216 provides a ligand contact to K(+). N6-acetyllysine; alternate occurs at positions 220 and 227. N6-succinyllysine; alternate occurs at positions 220 and 227. The residue at position 240 (Lys240) is an N6-succinyllysine. Lys242 carries the post-translational modification N6-acetyllysine; alternate. Lys242 is subject to N6-succinyllysine; alternate. 2 positions are modified to N6-acetyllysine: Lys248 and Lys254. Residues 255 to 257 (RVD) and Lys260 contribute to the CoA site. Residue Lys260 is modified to N6-acetyllysine; alternate. Lys260 is subject to N6-succinyllysine; alternate. An N6-succinyllysine mark is found at Lys263 and Lys265. At Lys270 the chain carries N6-acetyllysine. K(+)-binding residues include Ala277, Ala278, and Ala280. Ser281 serves as a coordination point for CoA. Lys335 is subject to N6-acetyllysine. K(+) is bound at residue Val378. Cys410 acts as the Proton donor/acceptor in catalysis.

This sequence belongs to the thiolase-like superfamily. Thiolase family. In terms of assembly, homotetramer. Post-translationally, succinylation at Lys-265, adjacent to a coenzyme A binding site. Desuccinylated by SIRT5.

The protein resides in the mitochondrion. It catalyses the reaction 2 acetyl-CoA = acetoacetyl-CoA + CoA. It carries out the reaction propanoyl-CoA + acetyl-CoA = 2-methyl-3-oxobutanoyl-CoA + CoA. Its pathway is lipid metabolism; fatty acid beta-oxidation. With respect to regulation, activated by potassium ions, but not sodium ions. Its function is as follows. This is one of the enzymes that catalyzes the last step of the mitochondrial beta-oxidation pathway, an aerobic process breaking down fatty acids into acetyl-CoA. Using free coenzyme A/CoA, catalyzes the thiolytic cleavage of medium- to long-chain 3-oxoacyl-CoAs into acetyl-CoA and a fatty acyl-CoA shortened by two carbon atoms. The activity of the enzyme is reversible and it can also catalyze the condensation of two acetyl-CoA molecules into acetoacetyl-CoA. Thereby, it plays a major role in ketone body metabolism. The protein is Acetyl-CoA acetyltransferase, mitochondrial (Acat1) of Rattus norvegicus (Rat).